Reading from the N-terminus, the 339-residue chain is tRNA (guanine-N(7)-)-methyltransferase (339 aa).

The interval 1–20 is disordered; it reads MTPPPAKRQKRNEYRKANTA. S-adenosyl-L-methionine is bound by residues glycine 94 and 117 to 118; that span reads EI. Positions 141 to 186 are disordered; that stretch reads RSSAIPSESSPAAQQPQQHHQQQLQATETAADAASPSSPDATGETL. Positions 142–181 are enriched in low complexity; the sequence is SSAIPSESSPAAQQPQQHHQQQLQATETAADAASPSSPDA. S-adenosyl-L-methionine contacts are provided by residues 202 to 203 and cysteine 222; that span reads NT. Aspartate 225 is a catalytic residue. 311-313 contributes to the S-adenosyl-L-methionine binding site; it reads TEE.

The protein belongs to the class I-like SAM-binding methyltransferase superfamily. TrmB family. Forms a complex with trm82.

The protein resides in the nucleus. The enzyme catalyses guanosine(46) in tRNA + S-adenosyl-L-methionine = N(7)-methylguanosine(46) in tRNA + S-adenosyl-L-homocysteine. It functions in the pathway tRNA modification; N(7)-methylguanine-tRNA biosynthesis. Functionally, catalyzes the formation of N(7)-methylguanine at position 46 (m7G46) in tRNA. The polypeptide is tRNA (guanine-N(7)-)-methyltransferase (trm8) (Aspergillus clavatus (strain ATCC 1007 / CBS 513.65 / DSM 816 / NCTC 3887 / NRRL 1 / QM 1276 / 107)).